The following is a 305-amino-acid chain: Spermatogenesis-associated protein 4 (305 aa).

The region spanning 49 to 155 is the Calponin-homology (CH) domain; it reads SRLSRSVLRW…EEVYTLLTHR (107 aa).

It is found in the nucleus. In terms of biological role, may play a role in apoptosis regulation. This is Spermatogenesis-associated protein 4 (SPATA4) from Pan troglodytes (Chimpanzee).